Reading from the N-terminus, the 264-residue chain is MKAVVLTVAVLFLTGSQARHFWQQDDPQSPWDRVKDFATLYVDAVKDTGRDYVSQFESSALGKQLNLKLLDNWDTLGSSISKLREQLGPVTQEFWDNLEKDTEWLRQEMNKDLEEVKQKVQPYLEEFQKKWQEEVERYRQKVEPLSTELREGARQKLQELQEKLTPLGEELRDHARTHVDVLRTQLAPYSDKMRERLAERLTALKDSASFAEYHAKASEHLKTLREKAKPAIEDLGQGLLPVLENLKASFLSAIDDAAKKLSSQ.

The signal sequence occupies residues 1 to 18; the sequence is MKAVVLTVAVLFLTGSQA. A run of 2 repeats spans residues 67–88 and 89–110. The segment at 67-264 is 10 X approximate tandem repeats; sequence LKLLDNWDTL…DDAAKKLSSQ (198 aa). At methionine 109 the chain carries Methionine sulfoxide. The 3; half-length repeat unit spans residues 111-121; it reads KDLEEVKQKVQ. Tandem repeats lie at residues 122-143, 144-165, and 166-187. One copy of the 7; truncated repeat lies at 188–207; it reads PYSDKMRERLAERLTALKDS. A Methionine sulfoxide modification is found at methionine 193. Repeat 8 spans residues 208 to 229; sequence ASFAEYHAKASEHLKTLREKAK. A 9; half-length repeat occupies 230 to 240; it reads PAIEDLGQGLL. The stretch at 241–264 is repeat 10; sequence PVLENLKASFLSAIDDAAKKLSSQ.

This sequence belongs to the apolipoprotein A1/A4/E family. In terms of assembly, homodimer. Interacts with APOA1BP and CLU. Component of a sperm activating protein complex (SPAP), consisting of APOA1, an immunoglobulin heavy chain, an immunoglobulin light chain and albumin. Interacts with NDRG1. Interacts with SCGB3A2. Interacts with NAXE and YJEFN3. Post-translationally, glycosylated. In terms of processing, palmitoylated. Phosphorylation sites are present in the extracellular medium.

It localises to the secreted. Participates in the reverse transport of cholesterol from tissues to the liver for excretion by promoting cholesterol efflux from tissues and by acting as a cofactor for the lecithin cholesterol acyltransferase (LCAT). As part of the SPAP complex, activates spermatozoa motility. The polypeptide is Apolipoprotein A-I (APOA1) (Castor canadensis (American beaver)).